The chain runs to 474 residues: Coiled-coil domain-containing protein 174 (474 aa).

Disordered regions lie at residues 39–86 (GVFG…REKL) and 129–170 (GATR…PSEE). Composition is skewed to basic and acidic residues over residues 64–86 (RAEK…REKL) and 129–142 (GATR…ERDA). A coiled-coil region spans residues 64–98 (RAEKDAEQKLEEQKTLDKSREKLEEKAKLYEKMTK). Residues 148 to 157 (NDDDDEEEFS) show a composition bias toward acidic residues. Residue serine 206 is modified to Phosphoserine. A coiled-coil region spans residues 276-317 (LEMLREQTTDQRIKRENIKEKRKAILEARLAKLRQKKMKKSK). Disordered regions lie at residues 309–372 (RQKK…IREW) and 389–461 (ELRA…VTFQ). 2 stretches are compositionally biased toward basic and acidic residues: residues 316–327 (SKVDGTEEESRA) and 356–372 (IQER…IREW). The segment covering 410 to 419 (RTGSLSSQPW) has biased composition (polar residues). Over residues 430–453 (GHSSGQSQEPSSSHTSTPASESSP) the composition is skewed to low complexity.

It localises to the nucleus. Functionally, probably involved in neuronal development. This chain is Coiled-coil domain-containing protein 174 (Ccdc174), found in Rattus norvegicus (Rat).